Reading from the N-terminus, the 3365-residue chain is MTSIANLFDKKSKRSNEDTGEKEETKKSRSGTLKFKTLFGTSKKDKEKKILQQLQQQQDDEQQQQQQQFMEGDNNNNNTNSLNTPSVEGDSENINRLAASTNSTSYSSLRSSSTRSIDYNPSNNGGNGGIRSDSFYSQTSESSDITSTSTTSPTMSAASSSSSSGTVKTPKPPKSSKLKHIYNSLKFKSLKTEKNGSSSSIKSNISNFEFIMPNTPLPIFDQQSPPIHFYNSNQFSDFQYFGTPLYSLIKRQDNGLSIPILLEKSISFLEGHCHVEDLFFRKYNNEKVKFMRNSFERTGDFNFYYPDPQDPYDVAALLVEFIASLPDQLLNVELYNAIKNHTSALNSQYGGYWDIQYLAQKLSVESREFLQRLLFFLKKHVSACLFKQQQQQQQQRESTEVLTLSLSSSTSTLEPEPQPLPLSTSTQRLPQQSSDDNSNNDNNNKNDNDNDNDNDNNNDNNNINNDNGEIIPPSIQVTPPTSPQTQPKQQQPPQPPQKTLIEKLSELFTPLFVNYKTHSAFYSSTSTLITSCEDIFVHIDERPITLPGEFIMMQIKNVIIPPTNLKLEHTISSSSKSDKNDKNDKNGNTDVTLWQSGTLFITNYRMIWKKDESNSIDSESNSILLPEDIITPTQSFSSINNNNNNNSSKFVEIKLYSFEIILTSIIKWESFGKSLKSTTPMMSTPTTFQNGGVNRSQFQIFLCYCKNIRFQYMGFSDESNFRDLEKLNLILAYYINPLIDFGRYFSSVNNEIPRAPLLANNNNSSSNLISLGRSGITNTSTANINGSNRNSVGGNGSHDYTTNIWDIYSPLIEGQRLKLDLDKDWRVVEFLSRDTSTIYPKRILIPNLIGDELLQSYVRKTQSKIPIFSWSNQNNKSMLFRICVYNQPFNNKFNSGGTLAYNNNSTIINNNSVIITNSSTIGTNTSGISNSNHLIVGEIEPPSPIKKRQQQIVDKKDTSSPLSSLRSSKGIPSKSSKKDKQGFLSSSTSSIIPIQTTISTDTVDVKLYNLFVNKEEQLQSSTSSSPSTSLNNSSNNLNKEFQQIHQQMQQNQLNSSSNNNNNNNNNNNNNNNNNNNNNNNNNNNNNNNNNNNNNNNKINKRQNEATIVFTNKVGGTSDNHINIISVYEQFKMNSSNIIFLSIPTREQVEACWFDLYQSITSFDGSMDAWKSIEESKWVDSVKLLLEGCVKVSNLLDEGSSVLLKPPIDSPLHTLDLASISSLTMVLSDPFYRTLDGFLILIEKEWIQYGFPFNNINYHKEQNNLNNNNGNKENSSSSSSSSSSTSTTPSITKKSSGSISKGSSGIASLINDLDKYDSNFVLPDTIHTESQKKKTYLFQDQYESSILVNRSFSPIFVQFLDAVWQLQRQFPFHFEFNESLLLLLVKESFSGRFGNFLYSEALRDSERKFLKRSPSIWTFINQNKSTFINLLYKHSANSSSSSSSTNKLPSPISPRQSFIFKQEDFNEMIKPSCDNDQIILWSSFFTEFINSRESQQISKKLIGKVKCDLISQKLTFLSIDRNLLSYFSTLTKLNLSRNYFNTFPIEIILLSNLTHLWLQDNRIKSIPSSLLKLIGSKLKLQEFDLSHNLLESLHKSIYTLSTLTKLVLDNNKLIIIPESISKMKQLKCLSVQNNRLSSFPQALSLCVGLEELYVQNNQIRELPLGFFKLGSLRMLDLRNNQITKFKCHKLDDKSCFLMNEIIHFRMGPNPLQKLSNQMFEMRSLIHLELTGCSLSTVPLKLLDNLVNLEALYLNQNKLSEISIDFKRLFKLSVLDLSDNQFTNVPIHAMLPSLKKLYLHNNQLYNISFNDFNLPLLSELRLDGNKLTYVSPSIGTKLLSLTLLNLDRNPQITTLPHTLALLKKLKSLIVNSNIMESPFRELETTDAILRYLTLQMQQSQFHPRNKLIIISDITNPQIKNEFIKNLTIAKPLTSKEREKEKEKEKEKEKEKKHKNIGYGSKDKDKKGININYQQQHQQQQQYQQHQYSSQIGFNQNLPIKWEIDYENYPNSALYNLASTIHCTNSFISQPIMISSSNQECTKLNKEEFLNSRFNTQEISKKKNLTIFIRDLSQLNSSGSASASGNGSGNGNGIGISNTNCSQHLFSKRAVYCLVWALSESEEPTRIYKWLESIRDRCTFATVFIVGLYNSDYCQDVPKDYYTFITPKIEQKCHNLFPNFTFSFINILNNNNNNNNNNNNNNNNNNNNSGGNVVPVQPSINNSIDNNVENTNNNNNIINNNNNNNNNNNNNNNNNNSYNSNSNSNSNNNNNNNSNNNNNNNINNNNINNNNNNNNNNNNNNNNNNNNNNSNNNSNNNSNSNSNSNSNNSNNNNINNNNSNNNNNNNNNNNNNNNNNNNNNNNNNNNNNDNDNNNNDNNNNLNNSNLNNNNGSNINISSSNNILGGMPKLREEIKNVFLNFKPFGTKVSSSQKLFEKHIKTLQTPFISKKELFSIGEMCKLDKIETKNTCELLTELGLLFWSEDHDWVILDPIWLSNTLNLLLTLKQSSSAPSTPPQIPLNSTNLNNTSIPSQITTTSTNSSSTSTSTSTSTSTSTSTSTSTSTSTPLQTPTSLVSLSNISLSTISIPIQPNTSSILLDSSMNDSFNKESSGSNKVANPTIRKRDIILMSNLEGIWNDIPTRLYPYLLTLAKKFNIAYQIDTLYDPTSWGFVYPSPISNQQQQQQQQSSTQHQHQHHHHQQQQQTSINLNRLSISGSPSLRSISIRNGGNINTLNSSGSNNSSPLKFPNLALSPIRNGSNSNLTHHHGSNSSLNNLLSPLKNLQLQQKYDKLKLLNEKVIFLPNELPNEPPMSMDKMFLDVGEPRSLCRIFQFEKKIPSSFFPRLLSQLYMFCSIKHCWKNGVILENCYLSFPVARRFPMSPNAKNPFRRSSTISVLEADDLVSIQVLGDTKIEISSSKMCRHILQIFESILESYNQLAYTIYISCIHCIETLPKSEQYLFSLNQIEESVIKGKTYQSCPIHSSIPIKLNQLAPDLTMNDLRHKLIDFKEVELDPNPIGEGGTATVYKGKWRQSDVAIKLLKTDVVGSDFSKVFAEYRREIFCLSSFIHDNILDLKGFCLEPLAIITEFQSGGNLYDYIHDLKNPLDWQLRIKIAKGIAASLQTLHDSRPSVVHRDLKSPNILLSSKDSLTMECHLCDFSLSGFSTTVANRSVQNPVWLAPEVINNELCSDKSDVYAYGVILFELLSRTRFFSNITFMSEVEGLITEGVRPSLPSHNLPEYDSLLNICWAQDPTCRPSFIEITKKLEEIELILKTHTPVEPVYTETSKNQHIQLNRGNTIYTLVKRPITPIQQQQQQKQQQLQQQKQSPKQLQQQKPLPTPPKQLSNNDSTPTKPLDDSSDSSSEDSNN.

5 disordered regions span residues 1 to 177, 397 to 497, 944 to 985, 1044 to 1098, and 1261 to 1301; these read MTSI…KSSK, ESTE…QPPQ, PIKK…GFLS, IHQQ…NNKI, and QNNL…ISKG. Positions 8–27 are enriched in basic and acidic residues; sequence FDKKSKRSNEDTGEKEETKK. Low complexity-rich tracts occupy residues 51 to 84, 100 to 116, 137 to 169, and 397 to 415; these read LQQLQQQQDDEQQQQQQQFMEGDNNNNNTNSLNT, STNSTSYSSLRSSSTRS, SQTSESSDITSTSTTSPTMSAASSSSSSGTVKT, and ESTEVLTLSLSSSTSTLEP. The 195-residue stretch at 243–437 folds into the Rho-GAP domain; that stretch reads TPLYSLIKRQ…RLPQQSSDDN (195 aa). Residues 421-434 show a composition bias toward polar residues; it reads PLSTSTQRLPQQSS. Composition is skewed to low complexity over residues 435–445, 457–489, 959–974, 1044–1096, and 1262–1301; these read DDNSNNDNNNK, NNDNNNINNDNGEIIPPSIQVTPPTSPQTQPKQ, SSPLSSLRSSKGIPSK, IHQQ…NNNN, and NNLNNNNGNKENSSSSSSSSSSTSTTPSITKKSSGSISKG. In terms of domain architecture, Myotubularin phosphatase spans 804–1484; it reads IWDIYSPLIE…DQIILWSSFF (681 aa). LRR repeat units follow at residues 1510–1526, 1527–1549, 1550–1572, 1576–1599, 1600–1622, 1624–1645, 1646–1668, 1670–1691, 1697–1720, 1722–1743, 1744–1770, 1772–1789, 1790–1812, 1814–1835, 1837–1861, and 1863–1887; these read SQKLTFLSIDRNLLSYF, STLTKLNLSRNYFNTFPIEIILL, SNLTHLWLQDNRIKSIPSSLLKL, KLKLQEFDLSHNLLESLHKSIYTL, STLTKLVLDNNKLIIIPESISKM, QLKCLSVQNNRLSSFPQALSLC, VGLEELYVQNNQIRELPLGFFKL, SLRMLDLRNNQITKFKCHKLDD, MNEIIHFRMGPNPLQKLSNQMFEM, SLIHLELTGCSLSTVPLKLLDN, LVNLEALYLNQNKLSEISIDFKRLFKL, VLDLSDNQFTNVPIHAML, PSLKKLYLHNNQLYNISFNDFNL, LLSELRLDGNKLTYVSPSIGTK, LSLTLLNLDRNPQITTLPHTLALLK, and LKSLIVNSNIMESPFRELETTDAIL. Positions 1932–1947 are enriched in basic and acidic residues; sequence SKEREKEKEKEKEKEK. Disordered stretches follow at residues 1932 to 1963, 2190 to 2389, 2507 to 2567, and 2674 to 2704; these read SKEREKEKEKEKEKEKEKKHKNIGYGSKDKDK, NNNN…NNGS, APST…LQTP, and SNQQQQQQQQSSTQHQHQHHHHQQQQQTSIN. Low complexity-rich tracts occupy residues 2190–2205, 2216–2389, 2522–2567, and 2676–2688; these read NNNNNNNNNNNNNNNN, SINN…NNGS, NNTS…LQTP, and QQQQQQQQSSTQH. Positions 3008–3269 constitute a Protein kinase domain; sequence ELDPNPIGEG…KKLEEIELIL (262 aa). ATP-binding positions include 3014 to 3022 and K3035; that span reads IGEGGTATV. Catalysis depends on D3132, which acts as the Proton acceptor. The span at 3311 to 3333 shows a compositional bias: low complexity; sequence QQQKQQQLQQQKQSPKQLQQQKP. The tract at residues 3311–3365 is disordered; it reads QQQKQQQLQQQKQSPKQLQQQKPLPTPPKQLSNNDSTPTKPLDDSSDSSSEDSNN. Positions 3354–3365 are enriched in acidic residues; sequence DSSDSSSEDSNN.

The protein belongs to the protein kinase superfamily. TKL Ser/Thr protein kinase family. ROCO subfamily.

The catalysed reaction is L-seryl-[protein] + ATP = O-phospho-L-seryl-[protein] + ADP + H(+). The enzyme catalyses L-threonyl-[protein] + ATP = O-phospho-L-threonyl-[protein] + ADP + H(+). The polypeptide is Probable serine/threonine-protein kinase roco9 (roco9) (Dictyostelium discoideum (Social amoeba)).